The following is a 1643-amino-acid chain: Lysine-specific demethylase 6B (1643 aa).

4 disordered regions span residues 52 to 88 (GQPP…PLHG), 190 to 680 (AKRG…PLED), 704 to 807 (ESIR…LKSL), and 822 to 1096 (GAAV…RSLS). Low complexity-rich tracts occupy residues 63-74 (SHGSSSGHPSKP) and 212-223 (AALSGPSGEEGL). Ser-224 carries the post-translational modification Phosphoserine. Over residues 242-266 (PGLPLPPPPLPPPPPPPPPPPPPLP) the composition is skewed to pro residues. Basic and acidic residues predominate over residues 291–307 (GPERKGSAPPERQEQRH). Residues 332 to 342 (AAPPGPGPRPP) are compositionally biased toward pro residues. The span at 359–370 (DLRESRVQRSRM) shows a compositional bias: basic and acidic residues. A compositionally biased stretch (low complexity) spans 394-412 (PGTTTSSSSSSSSNTGLRG). Over residues 460–484 (SLPPGPSSPPPPPCPRLLRPPPPPA) the composition is skewed to pro residues. Residues 550-569 (TTSSSNSNSGSHSSSPAGPV) are compositionally biased toward low complexity. Pro residues-rich tracts occupy residues 584–600 (LPRP…PPLV) and 641–658 (GPGP…PVPP). Over residues 704–714 (ESIRKEEEQQQ) the composition is skewed to basic and acidic residues. Over residues 740–764 (TAPTTTAPAVAVTTTTTTTTTTTAT) the composition is skewed to low complexity. Pro residues predominate over residues 772-800 (PPALPPPPPLAKFPPPSQPQPPPPPPPSP). Positions 843-877 (SGATALPPTSAAPSAQGSPQPSASSSSQFSTSGGP) are enriched in low complexity. The span at 889–904 (VPGPMTPTQPPPPLSL) shows a compositional bias: pro residues. A compositionally biased stretch (basic and acidic residues) spans 916–929 (EISRACETLVERVG). Positions 972 to 989 (CKRRQKEHQKEHRRHRRA) are enriched in basic residues. Positions 990-1003 (CKDSVGRRPREGRA) are enriched in basic and acidic residues. Over residues 1004–1016 (KAKAKVPKEKSRR) the composition is skewed to basic residues. Over residues 1047–1067 (PTAPAPPSAPAPSAQPTPPSA) the composition is skewed to pro residues. Residue Lys-1109 forms a Glycyl lysine isopeptide (Lys-Gly) (interchain with G-Cter in SUMO2) linkage. The tract at residues 1288–1325 (FQESLQEEKESEDEESEEPDSTTGTPPSSAPDPKNHHI) is disordered. A compositionally biased stretch (acidic residues) spans 1296 to 1307 (KESEDEESEEPD). The 164-residue stretch at 1339-1502 (RWKPQLQELL…YQLALERYEW (164 aa)) folds into the JmjC domain. Fe cation contacts are provided by His-1390, Glu-1392, and His-1470. Residues Cys-1575, Cys-1578, Cys-1602, and Cys-1605 each contribute to the Zn(2+) site.

This sequence belongs to the UTX family. Interacts with TLE1. Component of the MLL4 complex, at least composed of KMT2B/MLL4, ASH2L, RBBP5, WDR5, and KDM6B. Interacts with TBX21, SMARCA4, SMARCC1 and SMARCC2. L-ascorbate serves as cofactor. The cofactor is Fe(2+).

The protein resides in the nucleus. The catalysed reaction is N(6),N(6),N(6)-trimethyl-L-lysyl(27)-[histone H3] + 2 2-oxoglutarate + 2 O2 = N(6)-methyl-L-lysyl(27)-[histone H3] + 2 formaldehyde + 2 succinate + 2 CO2. Functionally, histone demethylase that specifically demethylates 'Lys-27' of histone H3, thereby playing a central role in histone code. Demethylates trimethylated and dimethylated H3 'Lys-27'. Plays a central role in regulation of posterior development, by regulating HOX gene expression. Involved in inflammatory response by participating in macrophage differentiation in case of inflammation by regulating gene expression and macrophage differentiation. Plays a demethylase-independent role in chromatin remodeling to regulate T-box family member-dependent gene expression by acting as a link between T-box factors and the SMARCA4-containing SWI/SNF remodeling complex. This is Lysine-specific demethylase 6B (KDM6B) from Homo sapiens (Human).